The primary structure comprises 63 residues: Alpha-toxin CsE5 (63 aa).

The 60-residue stretch at 2–61 (KDGYPVDSGNCKYECLKDDYCNDLCLERKADKGYCYWGKVSCYCYGLPDNSPTKTSGKCN) folds into the LCN-type CS-alpha/beta domain. 4 cysteine pairs are disulfide-bonded: Cys-12–Cys-60, Cys-16–Cys-36, Cys-22–Cys-43, and Cys-26–Cys-45.

Belongs to the long (4 C-C) scorpion toxin superfamily. Sodium channel inhibitor family. Alpha subfamily. As to expression, expressed by the venom gland.

It localises to the secreted. In terms of biological role, alpha toxins bind voltage-independently at site-3 of sodium channels (Nav) and inhibit the inactivation of the activated channels, thereby blocking neuronal transmission. This is Alpha-toxin CsE5 from Centruroides sculpturatus (Arizona bark scorpion).